The following is a 285-amino-acid chain: Chemotaxis protein LafT (285 aa).

The next 4 helical transmembrane spans lie at 4–23 (FLGVLTILVCVFGGYMWAGG), 34–51 (FLIIIGAAAGSLIIGNPP), 171–191 (ALPGFGILAAVGGIIITMQAI), and 201–222 (HVAAALVGTFIGIFGCYCGLDP). The Cytoplasmic segment spans residues 223–285 (LSNAMAQRVK…MEKWLAEQEG (63 aa)).

The protein belongs to the MotA family.

The protein localises to the cell inner membrane. Its function is as follows. Required for rotation of the flagellar motor. Probable transmembrane proton channel. The chain is Chemotaxis protein LafT (lafT) from Vibrio parahaemolyticus serotype O3:K6 (strain RIMD 2210633).